We begin with the raw amino-acid sequence, 148 residues long: Nucleoside diphosphate kinase 1 (148 aa).

ATP-binding residues include Lys9, Phe57, Arg85, Thr91, Arg102, and Asn112. The active-site Pros-phosphohistidine intermediate is His115.

Belongs to the NDK family. Requires Mg(2+) as cofactor.

The catalysed reaction is a 2'-deoxyribonucleoside 5'-diphosphate + ATP = a 2'-deoxyribonucleoside 5'-triphosphate + ADP. The enzyme catalyses a ribonucleoside 5'-diphosphate + ATP = a ribonucleoside 5'-triphosphate + ADP. Its function is as follows. Major role in the synthesis of nucleoside triphosphates other than ATP. The ATP gamma phosphate is transferred to the NDP beta phosphate via a ping-pong mechanism, using a phosphorylated active-site intermediate. This is Nucleoside diphosphate kinase 1 from Nicotiana tabacum (Common tobacco).